The chain runs to 522 residues: Cell polarity protein mod5 (522 aa).

Disordered stretches follow at residues 1-83, 119-158, 170-192, 251-285, and 300-516; these read MSAL…PDGD, KRSASKSPKRSANGSTSEDISIEGSPSETAKGARSSFNSN, RRILEASQDSSRPGRYSYRTKSA, PLQPYSPPANETPASSSSSAKARPVSVPDMSSPVP, and YSPS…KLEK. 3 stretches are compositionally biased toward polar residues: residues 27–46, 66–76, and 131–146; these read PNTTVGFQFDNRNVGTSAPS, LPSSKQDTGSS, and NGSTSEDISIEGSPSE. Serine 43 carries the phosphoserine modification. A compositionally biased stretch (low complexity) spans 258-285; that stretch reads PANETPASSSSSAKARPVSVPDMSSPVP. Serine 303 carries the phosphoserine modification. Residues 308–318 are compositionally biased toward basic and acidic residues; sequence KVAETDSESRK. Positions 335–349 are enriched in polar residues; it reads GAQTQSTPNRISRSD. Serine 350 is modified (phosphoserine). Polar residues-rich tracts occupy residues 363-396 and 404-431; these read NASTASSEAISQSMRSFQPQPNTGSPFPRFTSTN and DIPQSDANDSTVNLNQPNYANLTPTPQV. Positions 439–452 are enriched in low complexity; that stretch reads SRSSPLPSASVPAL. Basic and acidic residues-rich tracts occupy residues 472–482 and 495–516; these read HESEMPPHVTR and PKEKPSEKSEKPPKKKGSKLEK.

As to quaternary structure, interacts with tea1 and tea3.

It localises to the cell membrane. Its function is as follows. With tea1, acts in a positive-feedback loop in the microtubule-mediated regulation of cell polarity. Involved in the anchoring of tea1 at the cortex as well as the correct localization of tea3. This chain is Cell polarity protein mod5 (mod5), found in Schizosaccharomyces pombe (strain 972 / ATCC 24843) (Fission yeast).